We begin with the raw amino-acid sequence, 236 residues long: Thymidylate kinase (236 aa).

Residue 9-16 (GPEGSGKS) participates in ATP binding.

It belongs to the thymidylate kinase family.

It carries out the reaction dTMP + ATP = dTDP + ADP. In terms of biological role, phosphorylation of dTMP to form dTDP in both de novo and salvage pathways of dTTP synthesis. The polypeptide is Thymidylate kinase (Herpetosiphon aurantiacus (strain ATCC 23779 / DSM 785 / 114-95)).